The primary structure comprises 1375 residues: MSKKKFIDKEISKYVLRRDYSKIEKNFNEPNLLNLQKNAFHKFIDTELEGTIKSIFPIKSIGGRYSLEYIGMKLEKPKRSEKEARNEGKTYDRPLYVDLAIVDNESGEVKKTTKSSKNKASNTDGIFFASIPMITEKGTFIVNGIEKFVISQIVRSPGAYILTKSQIKLSNSRKRIQEGYICEILPAKGTLFFIFMAENKDFIQVMFRDAIGESTHTIPITAFLKALGLNKEEILNIFANHKSIKNSLDNEIYNEKDVFETDELINLRKNLNSSDSNRSYGVDTKLRELFKKYSSLKSQLEAEGKNAEKQKELNEVINNIISEKAAKDLVINLSISTKNIDSKFRLSNKETTYQSIIYNHFFSNKSFDLSKAGRFKMARKMRLSERLYQRVLAEDLKDINGKVVIKKNTLIQKHELDTIKQLTKEGKLGIVHNVNLDERISKMANVVKYEKINVYQDNDSQDEFIPIIGTDTSLDKPTLSISDILSITSYVINLDYDIGFYDDIDHLGNKRLKLIDELLKTRAQAGLVRIEKFINDKLAIADGANKSQEQSEEQEPKKSLTVKSIINTKPFQISFKEFFNSHQLTQFLDQQNPLAELTNKRRISAMGPGGISREDPNLDIRDVHYSHYGKICPIETPEGMNIGLIMSLATYASTDENGFLITPYRIVKNGVITDEIRWLTALSEDEYIIACSNLNVEKNKFKEDKVLCRYRSSWEFFDVKDVDFIDISPKQVVSIAASSIPFLENDDANRALMGANMQRQATPLISPIAPIVGTGNEYKIAHDSGMAAVYDGEKDGTVSYVDGGTIKIKSGSEEKVYELTKFNKSNQNTCNNQVPIVSVGEKVTKGTTIADGPAMSNGELALGQNVLVAFTTWSGYNYEDAIILSKRLFMEDIFTSIHIVEYSVDCLKTKNGDEEITRDIPNVSESSKKYLDDEGIIMVGAEVKEGDVLVGKISPKGQVELTSEEKLLQAIFGDKSKNHKETSLKVPHGGEGTVAMVKRFKVEDDYELNADVIEQIKVYVVQKRKIQIGDKMAGRHGNKGIISKIVPVEDMPHLEDGTTIDIMLNPLGVPSRMNIGQILELHLGLAMKKLTLSKVLELYYDKKPASDFSLWFGIHEEASRNLIKNLEKILNEKQIKSLDQANKEFTDFDLSLALSRSGISREKLIYKTATPVFEGVNRTDLKEAMTEAGIDPINGKLGEGKSGKFNLIDGRTGEYFDGEVSVGIMYMLKLDHMVDDKIHSRAVGPYSKITQQPLGGKSQNGGQRFGEMEVWALEAYGAAHNLRELLTIKSDDVKGRNNTYNAIIKGKPIPESGLPESFKLLTKQLQGLGLQVSITKELGKANNNNFKDINEYISNITNNAIKNDEDQQIIEEMDI.

This sequence belongs to the RNA polymerase beta chain family. In terms of assembly, the RNAP catalytic core consists of 2 alpha, 1 beta, 1 beta' and 1 omega subunit. When a sigma factor is associated with the core the holoenzyme is formed, which can initiate transcription.

The catalysed reaction is RNA(n) + a ribonucleoside 5'-triphosphate = RNA(n+1) + diphosphate. DNA-dependent RNA polymerase catalyzes the transcription of DNA into RNA using the four ribonucleoside triphosphates as substrates. This is DNA-directed RNA polymerase subunit beta from Malacoplasma penetrans (strain HF-2) (Mycoplasma penetrans).